Here is a 789-residue protein sequence, read N- to C-terminus: DEAD-box ATP-dependent RNA helicase 28 (789 aa).

The disordered stretch occupies residues 1–152 (MPSSFFFEDA…AEYKPEDATP (152 aa)). Residues 13 to 66 (DELELIRNQEDSSEEDVKEGEAEEHEAGEDEDGEEEYEEEDDDEEEEDEKRKRD) are a coiled coil. The span at 23 to 60 (DSSEEDVKEGEAEEHEAGEDEDGEEEYEEEDDDEEEED) shows a compositional bias: acidic residues. A compositionally biased stretch (basic and acidic residues) spans 83 to 99 (GEEHARRHTTSIDEKIS). The stretch at 110–135 (SINEEEEEEEEEEDASDAETDKQEEY) forms a coiled coil. Residues 112–127 (NEEEEEEEEEEDASDA) are compositionally biased toward acidic residues. The Q motif motif lies at 167–195 (DTFMELNLSRPLLRACETLGYKKPTPIQA). Positions 198–372 (IPLALTGRDL…KLSLNKPLRL (175 aa)) constitute a Helicase ATP-binding domain. 211-218 (AITGSGKT) provides a ligand contact to ATP. Positions 320–323 (DEAD) match the DEAD box motif. Residues 402 to 546 (VLLSLCTRTF…SRVIPEQSIV (145 aa)) enclose the Helicase C-terminal domain. 2 coiled-coil regions span residues 563–591 (ISAERDERALRKAEMEFAKAENMLEHRDE) and 628–677 (SADR…EDEE). The disordered stretch occupies residues 611–789 (AQAEKDSAGN…FKSKARYKRR (179 aa)). The span at 628–637 (SADRAEDLKM) shows a compositional bias: basic and acidic residues. The span at 638 to 656 (KEKRKREREKNLPRKKRRK) shows a compositional bias: basic residues. Residues 665-678 (EDNEGEEEEEDEEG) show a composition bias toward acidic residues. 3 stretches are compositionally biased toward basic and acidic residues: residues 691 to 701 (KKQETDKKGLT), 718 to 734 (RAIDSGKMERPKPDKKQ), and 743 to 761 (PRGEEMKDLFKSDMGEKKQ). Residues 772–789 (PRTKSKNSFKSKARYKRR) show a composition bias toward basic residues.

Belongs to the DEAD box helicase family. DDX27/DRS1 subfamily.

The enzyme catalyses ATP + H2O = ADP + phosphate + H(+). The protein is DEAD-box ATP-dependent RNA helicase 28 (RH28) of Arabidopsis thaliana (Mouse-ear cress).